The primary structure comprises 739 residues: NAD(P)H-quinone oxidoreductase subunit 5, chloroplastic (739 aa).

16 helical membrane passes run 9-29 (WIIP…LLLF), 40-60 (WSFQ…NLSI), 89-109 (IDPL…MVLI), 125-145 (FAYM…SNLI), 147-167 (IYIF…FWFT), 184-204 (IGDF…GSFE), 224-244 (LFVT…SAQF), 258-278 (TPIS…FLVA), 289-311 (YIMN…LALA), 318-338 (GLAF…GMGS), 354-374 (ALLF…VGYS), 396-416 (NTFL…CFWS), 427-447 (YSTI…FYIF), 546-566 (LFPL…GIPF), 605-625 (VSSV…YKPP), and 718-738 (ISSY…VFFI).

The protein belongs to the complex I subunit 5 family. As to quaternary structure, NDH is composed of at least 16 different subunits, 5 of which are encoded in the nucleus.

Its subcellular location is the plastid. It is found in the chloroplast thylakoid membrane. The enzyme catalyses a plastoquinone + NADH + (n+1) H(+)(in) = a plastoquinol + NAD(+) + n H(+)(out). The catalysed reaction is a plastoquinone + NADPH + (n+1) H(+)(in) = a plastoquinol + NADP(+) + n H(+)(out). Functionally, NDH shuttles electrons from NAD(P)H:plastoquinone, via FMN and iron-sulfur (Fe-S) centers, to quinones in the photosynthetic chain and possibly in a chloroplast respiratory chain. The immediate electron acceptor for the enzyme in this species is believed to be plastoquinone. Couples the redox reaction to proton translocation, and thus conserves the redox energy in a proton gradient. The polypeptide is NAD(P)H-quinone oxidoreductase subunit 5, chloroplastic (ndhF) (Coffea arabica (Arabian coffee)).